We begin with the raw amino-acid sequence, 109 residues long: A-type ATP synthase subunit F (109 aa).

Belongs to the V-ATPase F subunit family. As to quaternary structure, has multiple subunits with at least A(3), B(3), C, D, E, F, H, I and proteolipid K(x).

It is found in the cell membrane. Its function is as follows. Component of the A-type ATP synthase that produces ATP from ADP in the presence of a proton gradient across the membrane. This Haloquadratum walsbyi (strain DSM 16790 / HBSQ001) protein is A-type ATP synthase subunit F.